Here is an 833-residue protein sequence, read N- to C-terminus: Leucine--tRNA ligase (833 aa).

Residues 41–52 (PYPSGAGLHVGH) carry the 'HIGH' region motif. The short motif at 610-614 (KMSKS) is the 'KMSKS' region element. K613 contacts ATP.

This sequence belongs to the class-I aminoacyl-tRNA synthetase family.

The protein localises to the cytoplasm. It catalyses the reaction tRNA(Leu) + L-leucine + ATP = L-leucyl-tRNA(Leu) + AMP + diphosphate. The protein is Leucine--tRNA ligase of Streptococcus agalactiae serotype Ia (strain ATCC 27591 / A909 / CDC SS700).